The chain runs to 414 residues: Cytochrome c biogenesis protein Ccs1 (414 aa).

3 helical membrane passes run 14 to 34 (LTVAIIILLAIALASALGTVI), 73 to 93 (SWWFIFLIILLLLSLTLCTIT), and 159 to 179 (VSPIIVHFSLVIVLIGSMLST).

Belongs to the Ccs1/CcsB family. As to quaternary structure, may interact with CcsA.

The protein resides in the plastid. Its subcellular location is the chloroplast thylakoid membrane. Required during biogenesis of c-type cytochromes (cytochrome c6 and cytochrome f) at the step of heme attachment. This is Cytochrome c biogenesis protein Ccs1 from Guillardia theta (Cryptophyte).